The sequence spans 942 residues: Glutamyl aminopeptidase (942 aa).

Topologically, residues 1–14 (MSTDSKRYCIKTKH) are cytoplasmic. A helical; Signal-anchor for type II membrane protein membrane pass occupies residues 15 to 35 (VAIICAAVVAVGLIVGLSVGL). Residues 36-942 (TRSCDSKDGG…RDTIRDWFFN (907 aa)) are Extracellular-facing. Residues 40-74 (DSKDGGQGTTQSPSHLPPTSSPPQDQGVCPASEDE) are disordered. 3 N-linked (GlcNAc...) asparagine glycosylation sites follow: asparagine 110, asparagine 114, and asparagine 187. Glutamate 213 is a substrate binding site. Residue asparagine 314 is glycosylated (N-linked (GlcNAc...) asparagine). 347 to 351 (GAMEN) provides a ligand contact to substrate. Asparagine 367 is a glycosylation site (N-linked (GlcNAc...) asparagine). Residue histidine 383 participates in Zn(2+) binding. Glutamate 384 serves as the catalytic Proton acceptor. Zn(2+) contacts are provided by histidine 387 and glutamate 406. N-linked (GlcNAc...) asparagine glycans are attached at residues asparagine 557, asparagine 579, asparagine 587, asparagine 597, asparagine 632, asparagine 668, asparagine 753, asparagine 786, and asparagine 791. Position 877 (arginine 877) interacts with substrate.

Belongs to the peptidase M1 family. Homodimer; disulfide-linked. Zn(2+) serves as cofactor.

It is found in the cell membrane. The catalysed reaction is Release of N-terminal glutamate (and to a lesser extent aspartate) from a peptide.. Substrate specificity is modulated by calcium which enhances the enzymatic activity for cleavage of acidic residues while reducing its activity with basic residues. Inhibited by aminopeptidase inhibitors amastatin and bestatin. Its function is as follows. Regulates central hypertension through its calcium-modulated preference to cleave N-terminal acidic residues from peptides such as angiotensin II. This is Glutamyl aminopeptidase (ENPEP) from Sus scrofa (Pig).